Here is a 285-residue protein sequence, read N- to C-terminus: Vesicle-associated membrane protein 725 (285 aa).

Residues 1 to 261 (MDRSVVPISL…MWFENMKIKL (261 aa)) lie on the Cytoplasmic side of the membrane. Residues 75–179 (FVARGTVILV…SLNREFGSKL (105 aa)) form the Longin domain. The v-SNARE coiled-coil homology domain occupies 195 to 255 (KLAKVKAQVT…TKIRRKMWFE (61 aa)). The helical; Anchor for type IV membrane protein transmembrane segment at 262–282 (IVLGIIITLILIIILSVCGGF) threads the bilayer. Residues 283 to 285 (KCT) lie on the Vesicular side of the membrane.

It belongs to the synaptobrevin family. In terms of tissue distribution, expressed in flowers, leaves, stems and roots.

It is found in the cell membrane. Its subcellular location is the early endosome membrane. In terms of biological role, involved in the targeting and/or fusion of transport vesicles to their target membrane. This Arabidopsis thaliana (Mouse-ear cress) protein is Vesicle-associated membrane protein 725.